The primary structure comprises 456 residues: NAD-dependent deacetylase sir2C (456 aa).

Residues 161 to 443 (IEIENNKIKE…LNLSKLLNWD (283 aa)) form the Deacetylase sirtuin-type domain. The Proton acceptor role is filled by H294. 4 residues coordinate Zn(2+): C302, C305, C331, and C336.

This sequence belongs to the sirtuin family. The cofactor is Zn(2+).

It catalyses the reaction N(6)-acetyl-L-lysyl-[protein] + NAD(+) + H2O = 2''-O-acetyl-ADP-D-ribose + nicotinamide + L-lysyl-[protein]. Its function is as follows. NAD-dependent deacetylase, which plays an important role in the regulation of transcriptional repression. This chain is NAD-dependent deacetylase sir2C (sir2C), found in Dictyostelium discoideum (Social amoeba).